Here is a 371-residue protein sequence, read N- to C-terminus: DNA replication and repair protein RecF (371 aa).

30-37 (GPNAQGKT) serves as a coordination point for ATP.

The protein belongs to the RecF family.

The protein localises to the cytoplasm. The RecF protein is involved in DNA metabolism; it is required for DNA replication and normal SOS inducibility. RecF binds preferentially to single-stranded, linear DNA. It also seems to bind ATP. The polypeptide is DNA replication and repair protein RecF (Desulforamulus reducens (strain ATCC BAA-1160 / DSM 100696 / MI-1) (Desulfotomaculum reducens)).